The primary structure comprises 568 residues: Protein disconnected (568 aa).

Residues 16–77 (GHGPHSHQHV…PRRWGSPPIN (62 aa)) form a disordered region. The segment covering 19–29 (PHSHQHVHSHL) has biased composition (basic residues). Residues 30–45 (PSHPQPNAASPASSPG) are compositionally biased toward low complexity. Over residues 46 to 62 (GSSGSGSGSAAGSGTGS) the composition is skewed to gly residues. C2H2-type zinc fingers lie at residues 92–115 (VQCS…SAVH) and 120–145 (HKCT…ANPN). Disordered regions lie at residues 134–157 (RRSR…RRKI), 220–364 (LLST…SDAF), 391–419 (SSAS…DSDS), and 501–568 (QQYN…PISV). The segment covering 235-246 (NEQDADPEDDND) has biased composition (acidic residues). A compositionally biased stretch (polar residues) spans 253-263 (QANSSSPAASS). The span at 282–292 (SLSLASSSSIA) shows a compositional bias: low complexity. Basic and acidic residues predominate over residues 313-360 (SEQDREQEQEQEQEREREAEKEQEQDVESDKEHEPEQEHELEREKRSP). Low complexity predominate over residues 391–402 (SSASSSSASASA). Residues 520–550 (HLTLSHHHQEQHHHLGHHHMGHHHHHHHQHH) are compositionally biased toward basic residues. The segment covering 558–568 (SPAATNAPISV) has biased composition (polar residues).

Expressed at low levels in the adult head and very low, but detectable, levels in the body.

The protein resides in the nucleus. Functionally, required for the establishment of stable connections between the larval optic nerves, the Bolwig's nerves, and their target cells in the brain during embryonic development. The sequence is that of Protein disconnected (disco) from Drosophila melanogaster (Fruit fly).